A 280-amino-acid chain; its full sequence is 3-hydroxyanthranilate 3,4-dioxygenase (280 aa).

The tract at residues 1–160 is domain A (catalytic); the sequence is MAIPVNVKKW…SEQYKSGKPD (160 aa). O2 is bound at residue Arg-43. Fe cation is bound by residues His-47, Glu-53, and His-91. Glu-53 lines the substrate pocket. Arg-95 and Glu-105 together coordinate substrate. Residues 161 to 177 form a linker region; that stretch reads PAQPIGKMPFFLNTEQV. The domain B stretch occupies residues 178-280; the sequence is MEPFSFQNWL…IALSTSQVPA (103 aa).

This sequence belongs to the 3-HAO family. In terms of assembly, monomer. The cofactor is Fe(2+).

The protein resides in the cytoplasm. The protein localises to the cytosol. The enzyme catalyses 3-hydroxyanthranilate + O2 = (2Z,4Z)-2-amino-3-carboxymuconate 6-semialdehyde. It participates in cofactor biosynthesis; NAD(+) biosynthesis; quinolinate from L-kynurenine: step 3/3. In terms of biological role, catalyzes the oxidative ring opening of 3-hydroxyanthranilate to 2-amino-3-carboxymuconate semialdehyde, which spontaneously cyclizes to quinolinate. This Xenopus tropicalis (Western clawed frog) protein is 3-hydroxyanthranilate 3,4-dioxygenase (haao).